Consider the following 1155-residue polypeptide: DNA-directed RNA polymerase subunit beta (1155 aa).

Belongs to the RNA polymerase beta chain family. In terms of assembly, the RNAP catalytic core consists of 2 alpha, 1 beta, 1 beta' and 1 omega subunit. When a sigma factor is associated with the core the holoenzyme is formed, which can initiate transcription.

It carries out the reaction RNA(n) + a ribonucleoside 5'-triphosphate = RNA(n+1) + diphosphate. In terms of biological role, DNA-dependent RNA polymerase catalyzes the transcription of DNA into RNA using the four ribonucleoside triphosphates as substrates. This is DNA-directed RNA polymerase subunit beta from Borreliella afzelii (strain PKo) (Borrelia afzelii).